Consider the following 111-residue polypeptide: Small ribosomal subunit protein bS16 (111 aa).

It belongs to the bacterial ribosomal protein bS16 family.

The protein is Small ribosomal subunit protein bS16 of Rickettsia prowazekii (strain Madrid E).